We begin with the raw amino-acid sequence, 126 residues long: Small ribosomal subunit protein uS12 (126 aa).

At Asp89 the chain carries 3-methylthioaspartic acid.

The protein belongs to the universal ribosomal protein uS12 family. In terms of assembly, part of the 30S ribosomal subunit. Contacts proteins S8 and S17. May interact with IF1 in the 30S initiation complex.

In terms of biological role, with S4 and S5 plays an important role in translational accuracy. Interacts with and stabilizes bases of the 16S rRNA that are involved in tRNA selection in the A site and with the mRNA backbone. Located at the interface of the 30S and 50S subunits, it traverses the body of the 30S subunit contacting proteins on the other side and probably holding the rRNA structure together. The combined cluster of proteins S8, S12 and S17 appears to hold together the shoulder and platform of the 30S subunit. The sequence is that of Small ribosomal subunit protein uS12 from Polynucleobacter necessarius subsp. necessarius (strain STIR1).